Here is a 325-residue protein sequence, read N- to C-terminus: Protein SAR DEFICIENT 4 (325 aa).

The transit peptide at 1–42 (MAALPVFIPAESFPSILSHETLINHFRTNLPKHSSTITSPVR) directs the protein to the chloroplast.

Belongs to the ornithine cyclodeaminase/mu-crystallin family.

The protein localises to the plastid. Its subcellular location is the chloroplast. Its function is as follows. Involved in the biosynthesis of pipecolate (Pip), a metabolite that orchestrates defense amplification, positive regulation of salicylic acid (SA) biosynthesis, and priming to guarantee effective local resistance induction and the establishment of systemic acquired resistance (SAR). Converts delta-(1)-piperideine-2-carboxylate (P2C) to Pip. Mediates reduction of P2C and biosynthesis of Pip in systemic tissue and contributes to SAR establishment. Does not possess ornithine cyclodeaminase activity in vitro. The chain is Protein SAR DEFICIENT 4 from Arabidopsis thaliana (Mouse-ear cress).